Here is a 98-residue protein sequence, read N- to C-terminus: Small ribosomal subunit protein uS19 (98 aa).

A disordered region spans residues 77 to 98; the sequence is TRTFRGHAGGKAEKGGSAPRKK.

This sequence belongs to the universal ribosomal protein uS19 family.

Functionally, protein S19 forms a complex with S13 that binds strongly to the 16S ribosomal RNA. The protein is Small ribosomal subunit protein uS19 of Chlorobium limicola (strain DSM 245 / NBRC 103803 / 6330).